A 256-amino-acid polypeptide reads, in one-letter code: Large ribosomal subunit protein eL8y (256 aa).

A compositionally biased stretch (basic residues) spans 1–15 (MAPKKGVKVASKKKP). Residues 1 to 20 (MAPKKGVKVASKKKPEKVTN) form a disordered region.

It belongs to the eukaryotic ribosomal protein eL8 family.

This chain is Large ribosomal subunit protein eL8y (RPL7AB), found in Arabidopsis thaliana (Mouse-ear cress).